The primary structure comprises 389 residues: Mesotocin receptor (389 aa).

Residues 1-50 lie on the Extracellular side of the membrane; it reads MEGLCLNLDCSELPNSSWVNSSMENQNHSSNSTRDPLKRNEEVAKVEVTV. N-linked (GlcNAc...) asparagine glycosylation is found at Asn15, Asn20, Asn27, and Asn31. A helical membrane pass occupies residues 51 to 71; the sequence is LALILFLALAGNICVLLGIYI. Residues 72–87 lie on the Cytoplasmic side of the membrane; sequence NRHKHSRMYFFMKHLS. Residues 88–108 form a helical membrane-spanning segment; sequence IADLVVAIFQVLPQLIWDITF. Residues 109–119 lie on the Extracellular side of the membrane; it reads RFYAPDLVCRL. Cys117 and Cys192 form a disulfide bridge. A helical transmembrane segment spans residues 120 to 140; that stretch reads VTYLQVVGMFASTYMLLLMSL. The Cytoplasmic portion of the chain corresponds to 141-159; the sequence is DRCLAICQPLRSLHRRSDC. Residues 160–180 form a helical membrane-spanning segment; the sequence is VYVLFTWILSFLLSTPQTVIF. Topologically, residues 181–207 are extracellular; that stretch reads SLTEVGNGVYDCRADFIQPWGPKAYIT. A helical transmembrane segment spans residues 208–228; that stretch reads WITLAVYIIPVMILSVCYGLI. Residues 229-275 lie on the Cytoplasmic side of the membrane; the sequence is SYKIWQNIRLKTVCESNLRLSTSRRATLSRVSSVRLISKAKIRTVKM. The chain crosses the membrane as a helical span at residues 276-296; it reads TFIIVLAYIVCWTPFFFVQMW. Over 297 to 308 the chain is Extracellular; it reads SVWDPNPPKEAS. Residues 309–329 traverse the membrane as a helical segment; that stretch reads LFIIAMLLGSLNSCCNPWIYM. Residues 330–389 lie on the Cytoplasmic side of the membrane; that stretch reads LFTGHLFHDLLQSFLCCSARYLKTQQQGSDLSASRKSNSSTFVLSRKSSSQKSITQPSTA. The segment at 360-389 is disordered; it reads LSASRKSNSSTFVLSRKSSSQKSITQPSTA.

It belongs to the G-protein coupled receptor 1 family. Vasopressin/oxytocin receptor subfamily. As to expression, highly expressed in the bladder. Also expressed in kidney, brain and skeletal muscle.

The protein localises to the cell membrane. In terms of biological role, binds to mesotocin and may play a role in the regulation of water and salt transport. The chain is Mesotocin receptor from Rhinella marina (Cane toad).